Consider the following 388-residue polypeptide: Succinate--CoA ligase [ADP-forming] subunit beta (388 aa).

Residues 9-244 (KEIFRSMGVA…LEEEDPKEIE (236 aa)) form the ATP-grasp domain. ATP contacts are provided by residues Lys46, 53–55 (GRG), Glu99, Cys102, and Glu107. 2 residues coordinate Mg(2+): Asn199 and Asp213. Residues Asn264 and 321-323 (GIM) contribute to the substrate site.

This sequence belongs to the succinate/malate CoA ligase beta subunit family. As to quaternary structure, heterotetramer of two alpha and two beta subunits. Requires Mg(2+) as cofactor.

It catalyses the reaction succinate + ATP + CoA = succinyl-CoA + ADP + phosphate. It carries out the reaction GTP + succinate + CoA = succinyl-CoA + GDP + phosphate. Its pathway is carbohydrate metabolism; tricarboxylic acid cycle; succinate from succinyl-CoA (ligase route): step 1/1. In terms of biological role, succinyl-CoA synthetase functions in the citric acid cycle (TCA), coupling the hydrolysis of succinyl-CoA to the synthesis of either ATP or GTP and thus represents the only step of substrate-level phosphorylation in the TCA. The beta subunit provides nucleotide specificity of the enzyme and binds the substrate succinate, while the binding sites for coenzyme A and phosphate are found in the alpha subunit. This chain is Succinate--CoA ligase [ADP-forming] subunit beta, found in Staphylococcus aureus (strain Mu3 / ATCC 700698).